The sequence spans 263 residues: Proline rich transmembrane protein 1B (263 aa).

Positions Met1–Ser17 are enriched in gly residues. The interval Met1 to Tyr107 is disordered. Composition is skewed to low complexity over residues Gln37–Leu47 and Asp75–Pro86. 2 consecutive transmembrane segments (helical) span residues Met190–Val210 and Val238–Val258.

Belongs to the CD225/Dispanin family.

Its subcellular location is the membrane. This chain is Proline rich transmembrane protein 1B, found in Homo sapiens (Human).